We begin with the raw amino-acid sequence, 506 residues long: Maturase K (506 aa).

It belongs to the intron maturase 2 family. MatK subfamily.

It localises to the plastid. The protein localises to the chloroplast. In terms of biological role, usually encoded in the trnK tRNA gene intron. Probably assists in splicing its own and other chloroplast group II introns. This is Maturase K from Rhododendron ferrugineum (Alpenrose).